Here is a 424-residue protein sequence, read N- to C-terminus: UDP-N-acetylglucosamine 1-carboxyvinyltransferase (424 aa).

22–23 is a phosphoenolpyruvate binding site; it reads KN. Arg98 contacts UDP-N-acetyl-alpha-D-glucosamine. Residue Cys122 is the Proton donor of the active site. Cys122 carries the post-translational modification 2-(S-cysteinyl)pyruvic acid O-phosphothioketal. UDP-N-acetyl-alpha-D-glucosamine contacts are provided by residues 127-131, Asp312, and Ile334; that span reads RPVDQ.

It belongs to the EPSP synthase family. MurA subfamily.

Its subcellular location is the cytoplasm. It carries out the reaction phosphoenolpyruvate + UDP-N-acetyl-alpha-D-glucosamine = UDP-N-acetyl-3-O-(1-carboxyvinyl)-alpha-D-glucosamine + phosphate. The protein operates within cell wall biogenesis; peptidoglycan biosynthesis. Functionally, cell wall formation. Adds enolpyruvyl to UDP-N-acetylglucosamine. This is UDP-N-acetylglucosamine 1-carboxyvinyltransferase from Xanthomonas oryzae pv. oryzae (strain MAFF 311018).